The chain runs to 63 residues: Ferredoxin (63 aa).

Residues 2-29 (KVTVDQDLCIACGTCIDLCPSVFDWDDE) form the 4Fe-4S ferredoxin-type domain. 4 residues coordinate [4Fe-4S] cluster: Cys-10, Cys-13, Cys-16, and Cys-55.

[4Fe-4S] cluster is required as a cofactor.

Its function is as follows. Ferredoxins are iron-sulfur proteins that transfer electrons in a wide variety of metabolic reactions. The protein is Ferredoxin of Moorella thermoacetica (Clostridium thermoaceticum).